Reading from the N-terminus, the 167-residue chain is Large ribosomal subunit protein uL10 (167 aa).

The protein belongs to the universal ribosomal protein uL10 family. In terms of assembly, part of the ribosomal stalk of the 50S ribosomal subunit. The N-terminus interacts with L11 and the large rRNA to form the base of the stalk. The C-terminus forms an elongated spine to which L12 dimers bind in a sequential fashion forming a multimeric L10(L12)X complex.

Its function is as follows. Forms part of the ribosomal stalk, playing a central role in the interaction of the ribosome with GTP-bound translation factors. The polypeptide is Large ribosomal subunit protein uL10 (Flavobacterium johnsoniae (strain ATCC 17061 / DSM 2064 / JCM 8514 / BCRC 14874 / CCUG 350202 / NBRC 14942 / NCIMB 11054 / UW101) (Cytophaga johnsonae)).